Reading from the N-terminus, the 565-residue chain is 4-coumarate--CoA ligase-like 2 (565 aa).

Ser221, Ser222, Gly223, Thr224, Thr225, and Lys229 together coordinate ATP. Phe265 serves as a coordination point for (E)-4-coumaroyl-AMP. Lys286 serves as a coordination point for CoA. The segment at 288 to 359 (DMAKLLSAVE…ENYPKVKILQ (72 aa)) is SBD1. Positions 337, 359, 360, and 364 each coordinate (E)-4-coumaroyl-AMP. ATP contacts are provided by Gln359, Gly360, Thr364, Asp445, and Arg460. The tract at residues 360-424 (GYGLTESTAI…IRSPTVMKGY (65 aa)) is SBD2. (E)-4-coumaroyl-AMP-binding residues include Lys462 and Lys466. Gly469 provides a ligand contact to CoA. ATP is bound at residue Lys551. Positions 563–565 (SKL) match the Microbody targeting signal motif.

The protein belongs to the ATP-dependent AMP-binding enzyme family. The cofactor is Mg(2+).

The protein localises to the peroxisome. It catalyses the reaction (E)-4-coumarate + ATP + CoA = (E)-4-coumaroyl-CoA + AMP + diphosphate. The enzyme catalyses (E)-4-coumarate + ATP + H(+) = (E)-4-coumaroyl-AMP + diphosphate. The catalysed reaction is (E)-4-coumaroyl-AMP + CoA = (E)-4-coumaroyl-CoA + AMP + H(+). Carboxylate--CoA ligase that may use 4-coumarate as substrate. Follows a two-step reaction mechanism, wherein the carboxylate substrate first undergoes adenylation by ATP, followed by a thioesterification in the presence of CoA to yield the final CoA thioester. This is 4-coumarate--CoA ligase-like 2 from Arabidopsis thaliana (Mouse-ear cress).